A 234-amino-acid polypeptide reads, in one-letter code: UDP-2,3-diacylglucosamine hydrolase (234 aa).

Residues Asp-9, His-11, Asp-42, Asn-80, and His-115 each contribute to the Mn(2+) site. A substrate-binding site is contributed by 80-81; the sequence is NR. Residues Asp-123, Ser-161, Lys-165, Lys-168, and His-196 each coordinate substrate. His-196 and His-198 together coordinate Mn(2+).

The protein belongs to the LpxH family. The cofactor is Mn(2+).

It localises to the cell inner membrane. It carries out the reaction UDP-2-N,3-O-bis[(3R)-3-hydroxytetradecanoyl]-alpha-D-glucosamine + H2O = 2-N,3-O-bis[(3R)-3-hydroxytetradecanoyl]-alpha-D-glucosaminyl 1-phosphate + UMP + 2 H(+). Its pathway is glycolipid biosynthesis; lipid IV(A) biosynthesis; lipid IV(A) from (3R)-3-hydroxytetradecanoyl-[acyl-carrier-protein] and UDP-N-acetyl-alpha-D-glucosamine: step 4/6. In terms of biological role, hydrolyzes the pyrophosphate bond of UDP-2,3-diacylglucosamine to yield 2,3-diacylglucosamine 1-phosphate (lipid X) and UMP by catalyzing the attack of water at the alpha-P atom. Involved in the biosynthesis of lipid A, a phosphorylated glycolipid that anchors the lipopolysaccharide to the outer membrane of the cell. The chain is UDP-2,3-diacylglucosamine hydrolase from Histophilus somni (strain 129Pt) (Haemophilus somnus).